Here is a 326-residue protein sequence, read N- to C-terminus: Tagatose 1,6-diphosphate aldolase (326 aa).

Belongs to the aldolase LacD family.

It catalyses the reaction D-tagatofuranose 1,6-bisphosphate = D-glyceraldehyde 3-phosphate + dihydroxyacetone phosphate. It participates in carbohydrate metabolism; D-tagatose 6-phosphate degradation; D-glyceraldehyde 3-phosphate and glycerone phosphate from D-tagatose 6-phosphate: step 2/2. This Streptococcus pneumoniae serotype 4 (strain ATCC BAA-334 / TIGR4) protein is Tagatose 1,6-diphosphate aldolase.